Consider the following 1533-residue polypeptide: MPVKRLREVVSQNHGDHLVLLKDELPCVPPALSANKRLPVGTGTSLNGTSRGSSDLTSARNCYQPLLENPMVSESDFSKDVAVQVLPLDKIEENNKQKANDIFISQYTMGQKDALRTVLKQKAQSMPVFKEVKVHLLEDAGIEKDAVTQETRISPSGIDSATTVAAATAAAIATAAPLIKVQSDLEAKVNSVTELLSKLQETDKHLQRVTEQQTSIQRKQEKLHCHDHEKQMNVFMEQHIRHLEKLQQQQIDIQTHFISAALKTSSFQPVSMPSSRAVEKYSVKPEHPNLGSCNPSLYNTFASKQAPLKEVEDTSFDKQKSPLETPAPRRFAPVPVSRDDELSKRENLLEEKENMEVSCHRGNVRLLEQILNNNDSLTRKSESSNTTSLTRSKIGWTPEKTNRFPSCEELETTKVTMQKSDDVLHDLGQKEKETNSMVQPKESLSMLKLPDLPQNSVKLQTTNTTRSVLKDAEKILRGVQNNKKVLEENLEAIIRAKDGAAMYSLINALSTNREMSEKIRIRKTVDEWIKTISAEIQDELSRTDYEQKRFDQKNQRTKKGQNMTKDIRTNTQDKTVNKSVIPRKHSQKQIEEHFRNLPMRGMPASSLQKERKEGLLKATTVIQDEDYMLQVYGKPVYQGHRSTLKKGPYLRFNSPSPKSRPQRPKVIERVKGTKVKSIRTQTDFYATKPKKMDSKMKHSVPVLPHGDQQYLFSPSREMPTFSGTLEGHLIPMAILLGQTQSNSDTMPPAGVIVSKPHPVTVTTSIPPSSRKVETGVKKPNIAIVEMKSEKKDPPQLTVQVLPSVDIDSISNSSADVLSPLSSPKEASLPPVQTWIKTPEIMKVDEEEVKFPGTNFDEIIDVIQEEEKCDEIPDSEPILEFNRSVKADSTKYNGPPFPPVASTFQPTADILDKVIERKETLENSLIQWVEQEIMSRIISGLFPVQQQIAPSISVSVSETSEPLTSDIVEGTSSGALQLFVDAGVPVNSNVIKHFVNEALAETIAVMLGDREAKKQGPVATGVSGDASTNETYLPARVCTPLPTPQPTPPCSPSSPAKECVLVKTPDSSPCDSDHDMAFPVKEICAEKGDDMPAIMLVNTPTVTPTTTPPPAAAVFTPTLSDISIDKLKVSSPELPKPWGDGDLPLEEENPNSPQEELHPRAIVMSVAKDEEPESMDFPAQPPPPEPVPFMPFPAGTKAPSPSQMPGSDSSTLESTLSVTVTETETLDKPISEGEILFSCGQKLAPKILEDIGLYLTNLNDSLSSTLHDAVEMEDDPPSEGQVIRMSHKKFHADAILSFAKQNQESAVSQQAVYHSEDLENSVGELSEGQRPQLTAAAENILMGHSLYMQPPVTNTQSLDQQCDPKPLSRQFDTVSGSIYEDSCASHGPMSLGELELEPNSKLVLPTTLLTAQENDVNLPVAAEDFSQYQLKQNQDVKQVEHKPSQSYLRVRNKSDIAPSQQQVSPGDMDRTQIELNPYLTCVFSGGKAVPLSASQMPPAKMSVMLPSVNLEDCSQSLSLSTMQEDMESSGADTF.

The segment at 32–57 (LSANKRLPVGTGTSLNGTSRGSSDLT) is disordered. A compositionally biased stretch (polar residues) spans 42-57 (TGTSLNGTSRGSSDLT). The stretch at 182 to 223 (QSDLEAKVNSVTELLSKLQETDKHLQRVTEQQTSIQRKQEKL) forms a coiled coil. Residues 309–321 (KEVEDTSFDKQKS) are compositionally biased toward basic and acidic residues. Disordered stretches follow at residues 309-339 (KEVE…VSRD) and 377-400 (LTRK…TPEK). S406 bears the Phosphoserine mark. Positions 467–501 (SVLKDAEKILRGVQNNKKVLEENLEAIIRAKDGAA) form a coiled coil. Residues 467 to 554 (SVLKDAEKIL…YEQKRFDQKN (88 aa)) form a required for centrosomal localization region. Residues 546–575 (EQKRFDQKNQRTKKGQNMTKDIRTNTQDKT) form a disordered region. Polar residues predominate over residues 560 to 575 (GQNMTKDIRTNTQDKT). 2 positions are modified to phosphothreonine: T1042 and T1046. S1050 carries the post-translational modification Phosphoserine. At T1063 the chain carries Phosphothreonine. S1066 carries the post-translational modification Phosphoserine. A disordered region spans residues 1129 to 1156 (SSPELPKPWGDGDLPLEEENPNSPQEEL).

The protein belongs to the TALPID3 family. As to quaternary structure, interacts with CCP110, CEP290, CEP97, KIF24. In terms of tissue distribution, ubiquitously expressed. Expressed in photoreceptor cells (at protein level).

The protein resides in the cytoplasm. It is found in the cytoskeleton. It localises to the microtubule organizing center. Its subcellular location is the centrosome. The protein localises to the photoreceptor inner segment. The protein resides in the centriole. It is found in the cilium basal body. Functionally, required for ciliogenesis and sonic hedgehog/SHH signaling. Required for the centrosomal recruitment of RAB8A and for the targeting of centriole satellite proteins to centrosomes such as of PCM1. May play a role in early ciliogenesis in the disappearance of centriolar satellites that preceeds ciliary vesicle formation. Involved in regulation of cell intracellular organization. Involved in regulation of cell polarity. Required for asymmetrical localization of CEP120 to daughter centrioles. In Homo sapiens (Human), this protein is Protein TALPID3 (KIAA0586).